A 62-amino-acid chain; its full sequence is Photosystem II reaction center protein Z (62 aa).

Transmembrane regions (helical) follow at residues 8 to 28 and 41 to 61; these read AVFALIATSSILLISVPVVFA and FSGTSLWIALVFLVGILNSLI.

Belongs to the PsbZ family. As to quaternary structure, PSII is composed of 1 copy each of membrane proteins PsbA, PsbB, PsbC, PsbD, PsbE, PsbF, PsbH, PsbI, PsbJ, PsbK, PsbL, PsbM, PsbT, PsbY, PsbZ, Psb30/Ycf12, at least 3 peripheral proteins of the oxygen-evolving complex and a large number of cofactors. It forms dimeric complexes.

It is found in the plastid. It localises to the chloroplast thylakoid membrane. In terms of biological role, may control the interaction of photosystem II (PSII) cores with the light-harvesting antenna, regulates electron flow through the 2 photosystem reaction centers. PSII is a light-driven water plastoquinone oxidoreductase, using light energy to abstract electrons from H(2)O, generating a proton gradient subsequently used for ATP formation. This is Photosystem II reaction center protein Z from Lotus japonicus (Lotus corniculatus var. japonicus).